Reading from the N-terminus, the 187-residue chain is Ribosome hibernation promotion factor (187 aa).

It belongs to the HPF/YfiA ribosome-associated protein family. Long HPF subfamily. Interacts with 100S ribosomes.

Its subcellular location is the cytoplasm. Involved in 100S ribosome formation from 70S ribosomes; 100S ribosomes are probably translationally inactive. Ribosome hibernation may be used by the cell to decrease overall energy consumption under nutrient-limiting conditions. Unlike E.coli, 100S ribosomes are present from mid-exponential growth, peak during the transition from log to stationary phase and then decrease. In Listeria monocytogenes serotype 1/2a (strain 10403S), this protein is Ribosome hibernation promotion factor.